A 531-amino-acid polypeptide reads, in one-letter code: Peptide chain release factor 3 (531 aa).

Positions 10–278 constitute a tr-type G domain; sequence RRRRTFAIIS…SLIDWAPAPK (269 aa). Residues 19 to 26, 87 to 91, and 141 to 144 contribute to the GTP site; these read SHPDAGKT, DTPGH, and NKYD.

Belongs to the TRAFAC class translation factor GTPase superfamily. Classic translation factor GTPase family. PrfC subfamily.

The protein resides in the cytoplasm. Its function is as follows. Increases the formation of ribosomal termination complexes and stimulates activities of RF-1 and RF-2. It binds guanine nucleotides and has strong preference for UGA stop codons. It may interact directly with the ribosome. The stimulation of RF-1 and RF-2 is significantly reduced by GTP and GDP, but not by GMP. This chain is Peptide chain release factor 3, found in Neisseria gonorrhoeae (strain ATCC 700825 / FA 1090).